A 375-amino-acid polypeptide reads, in one-letter code: Probable aminomethyltransferase (375 aa).

The protein belongs to the GcvT family. The glycine cleavage system is composed of four proteins: P, T, L and H.

It catalyses the reaction N(6)-[(R)-S(8)-aminomethyldihydrolipoyl]-L-lysyl-[protein] + (6S)-5,6,7,8-tetrahydrofolate = N(6)-[(R)-dihydrolipoyl]-L-lysyl-[protein] + (6R)-5,10-methylene-5,6,7,8-tetrahydrofolate + NH4(+). Functionally, the glycine cleavage system catalyzes the degradation of glycine. This chain is Probable aminomethyltransferase, found in Aeropyrum pernix (strain ATCC 700893 / DSM 11879 / JCM 9820 / NBRC 100138 / K1).